A 320-amino-acid chain; its full sequence is Aspartate carbamoyltransferase catalytic subunit (320 aa).

The carbamoyl phosphate site is built by Arg70 and Thr71. Lys98 is a binding site for L-aspartate. Arg120, His149, and Gln152 together coordinate carbamoyl phosphate. L-aspartate-binding residues include Arg182 and Arg237. Residues Gly278 and Pro279 each coordinate carbamoyl phosphate.

Belongs to the aspartate/ornithine carbamoyltransferase superfamily. ATCase family. In terms of assembly, heterododecamer (2C3:3R2) of six catalytic PyrB chains organized as two trimers (C3), and six regulatory PyrI chains organized as three dimers (R2).

The enzyme catalyses carbamoyl phosphate + L-aspartate = N-carbamoyl-L-aspartate + phosphate + H(+). It functions in the pathway pyrimidine metabolism; UMP biosynthesis via de novo pathway; (S)-dihydroorotate from bicarbonate: step 2/3. Its function is as follows. Catalyzes the condensation of carbamoyl phosphate and aspartate to form carbamoyl aspartate and inorganic phosphate, the committed step in the de novo pyrimidine nucleotide biosynthesis pathway. This Vesicomyosocius okutanii subsp. Calyptogena okutanii (strain HA) protein is Aspartate carbamoyltransferase catalytic subunit.